Consider the following 981-residue polypeptide: uncharacterized protein (981 aa).

Disordered stretches follow at residues 65 to 133 (NIDN…SNNS), 149 to 463 (SSNS…NKIE), 491 to 580 (SNNI…DSPL), 592 to 834 (EQTN…LNQV), and 861 to 891 (VQNDTNSSPISQQLSTSSSPFKSTGGSNDGN). Positions 75-88 (SSDDDDDDDDDDDY) are enriched in acidic residues. Composition is skewed to low complexity over residues 89 to 133 (NNNN…SNNS), 149 to 158 (SSNSINNNDN), and 170 to 181 (SAKTTSSLTSSK). Basic and acidic residues predominate over residues 182–195 (RSLDSRNRNRDRSY). Residues 196–206 (TRSRSRSRSRS) show a composition bias toward basic residues. The span at 207–227 (YSRGFSSLSRSRSRSRSISSR) shows a compositional bias: low complexity. Over residues 228–269 (SRSRSRSRRSRSRSSRSRSRSRSKSKSKSRRSRSRSRSRRSR) the composition is skewed to basic residues. Residues 270–292 (SRSDSRSRSDSRGRSRSRSDSRK) show a composition bias toward basic and acidic residues. Basic residues predominate over residues 314–358 (SSKRHQNSRKRNRSYSRSRTRSWSRSRTRSRSRRRYGGRTFRSPR). Residues 359–452 (RSRDDSRDRG…SQSPHNEKNK (94 aa)) show a composition bias toward basic and acidic residues. Residues 491-553 (SNNINNNNIK…SHNNTNGNVN (63 aa)) show a composition bias toward low complexity. Polar residues-rich tracts occupy residues 554-576 (GVSKTTSSPASDNSTPENISTDL) and 605-622 (ESNNNGNDRFKTKCSSTE). Over residues 623-634 (NENKNRENEKNN) the composition is skewed to basic and acidic residues. Low complexity-rich tracts occupy residues 635–820 (SENS…NNNS) and 867–891 (SSPISQQLSTSSSPFKSTGGSNDGN).

This is an uncharacterized protein from Dictyostelium discoideum (Social amoeba).